The chain runs to 460 residues: Argininosuccinate lyase (460 aa).

Belongs to the lyase 1 family. Argininosuccinate lyase subfamily.

The protein resides in the cytoplasm. The enzyme catalyses 2-(N(omega)-L-arginino)succinate = fumarate + L-arginine. It functions in the pathway amino-acid biosynthesis; L-arginine biosynthesis; L-arginine from L-ornithine and carbamoyl phosphate: step 3/3. In Sulfurimonas denitrificans (strain ATCC 33889 / DSM 1251) (Thiomicrospira denitrificans (strain ATCC 33889 / DSM 1251)), this protein is Argininosuccinate lyase.